We begin with the raw amino-acid sequence, 320 residues long: Cytochrome c biogenesis protein CcsA (320 aa).

8 consecutive transmembrane segments (helical) span residues 15–35, 43–63, 71–91, 98–118, 143–163, 224–244, 251–271, and 285–305; these read FSIVSIVITIHLITLLVDEII, KGMIAIFLCITGLLVTRWIYS, LYESLIFLSWSLSVIHIVPYF, LSTITASSVIFTQGFATSGLL, MILSYAALLCGSLLSVALLVI, VISLGFIFLTIGILSGAVWAN, WNWDPKETWAFITWIVFAIYL, and AIVASIGFLIIWICYFGVNLL.

This sequence belongs to the CcmF/CycK/Ccl1/NrfE/CcsA family. As to quaternary structure, may interact with Ccs1.

It localises to the plastid. Its subcellular location is the chloroplast thylakoid membrane. Functionally, required during biogenesis of c-type cytochromes (cytochrome c6 and cytochrome f) at the step of heme attachment. This Panax ginseng (Korean ginseng) protein is Cytochrome c biogenesis protein CcsA.